Consider the following 426-residue polypeptide: Glutamyl-tRNA reductase (426 aa).

Substrate is bound by residues 49–52 (TCNR), Ser-110, 115–117 (EAQ), and Gln-121. The active-site Nucleophile is Cys-50. 191 to 196 (GAGEMA) serves as a coordination point for NADP(+).

It belongs to the glutamyl-tRNA reductase family. Homodimer.

It carries out the reaction (S)-4-amino-5-oxopentanoate + tRNA(Glu) + NADP(+) = L-glutamyl-tRNA(Glu) + NADPH + H(+). The protein operates within porphyrin-containing compound metabolism; protoporphyrin-IX biosynthesis; 5-aminolevulinate from L-glutamyl-tRNA(Glu): step 1/2. Functionally, catalyzes the NADPH-dependent reduction of glutamyl-tRNA(Glu) to glutamate 1-semialdehyde (GSA). The chain is Glutamyl-tRNA reductase from Rhodopirellula baltica (strain DSM 10527 / NCIMB 13988 / SH1).